The sequence spans 379 residues: S-adenosylmethionine synthase (379 aa).

Residue histidine 15 participates in ATP binding. Aspartate 17 serves as a coordination point for Mg(2+). Glutamate 43 contributes to the K(+) binding site. L-methionine contacts are provided by glutamate 56 and glutamine 99. The interval 99–109 (QSPDITQGVDR) is flexible loop. ATP-binding positions include 164–166 (DAK), 230–231 (RF), aspartate 239, 245–246 (RK), alanine 262, and lysine 266. Aspartate 239 serves as a coordination point for L-methionine. Lysine 270 serves as a coordination point for L-methionine.

Belongs to the AdoMet synthase family. In terms of assembly, homotetramer; dimer of dimers. Mg(2+) serves as cofactor. Requires K(+) as cofactor.

The protein resides in the cytoplasm. The enzyme catalyses L-methionine + ATP + H2O = S-adenosyl-L-methionine + phosphate + diphosphate. Its pathway is amino-acid biosynthesis; S-adenosyl-L-methionine biosynthesis; S-adenosyl-L-methionine from L-methionine: step 1/1. Its function is as follows. Catalyzes the formation of S-adenosylmethionine (AdoMet) from methionine and ATP. The overall synthetic reaction is composed of two sequential steps, AdoMet formation and the subsequent tripolyphosphate hydrolysis which occurs prior to release of AdoMet from the enzyme. The polypeptide is S-adenosylmethionine synthase (Buchnera aphidicola subsp. Schizaphis graminum (strain Sg)).